We begin with the raw amino-acid sequence, 122 residues long: Small ribosomal subunit protein bS6 (122 aa).

It belongs to the bacterial ribosomal protein bS6 family.

Binds together with bS18 to 16S ribosomal RNA. The sequence is that of Small ribosomal subunit protein bS6 from Vibrio cholerae serotype O1 (strain ATCC 39541 / Classical Ogawa 395 / O395).